Consider the following 77-residue polypeptide: DNA-directed RNA polymerase subunit epsilon (77 aa).

This sequence belongs to the RNA polymerase subunit epsilon family. RNAP is composed of a core of 2 alpha, a beta and a beta' subunit. The core is associated with a delta subunit, and at least one of epsilon or omega. When a sigma factor is associated with the core the holoenzyme is formed, which can initiate transcription.

The enzyme catalyses RNA(n) + a ribonucleoside 5'-triphosphate = RNA(n+1) + diphosphate. Its function is as follows. A non-essential component of RNA polymerase (RNAP). The polypeptide is DNA-directed RNA polymerase subunit epsilon (Streptococcus pneumoniae serotype 19F (strain G54)).